A 391-amino-acid polypeptide reads, in one-letter code: GTPase Obg (391 aa).

An Obg domain is found at 1–159; the sequence is MQFVDEATID…RRLRLELKVL (159 aa). Residues 160–333 enclose the OBG-type G domain; sequence ADVGLLGMPN…LVYALMNAIE (174 aa). Residues 166–173, 191–195, 213–216, 283–286, and 314–316 each bind GTP; these read GMPNAGKS, FTTLI, DIPG, NKID, and SAA. Residues S173 and T193 each contribute to the Mg(2+) site. The segment covering 367–377 has biased composition (basic and acidic residues); the sequence is LKAEARQARQN. The disordered stretch occupies residues 367–391; that stretch reads LKAEARQARQNDDDDDHDVEVVYEP. The segment covering 378–391 has biased composition (acidic residues); sequence DDDDDHDVEVVYEP.

The protein belongs to the TRAFAC class OBG-HflX-like GTPase superfamily. OBG GTPase family. In terms of assembly, monomer. Requires Mg(2+) as cofactor.

It is found in the cytoplasm. In terms of biological role, an essential GTPase which binds GTP, GDP and possibly (p)ppGpp with moderate affinity, with high nucleotide exchange rates and a fairly low GTP hydrolysis rate. Plays a role in control of the cell cycle, stress response, ribosome biogenesis and in those bacteria that undergo differentiation, in morphogenesis control. This is GTPase Obg from Alcanivorax borkumensis (strain ATCC 700651 / DSM 11573 / NCIMB 13689 / SK2).